The primary structure comprises 1047 residues: Isoleucine--tRNA ligase (1047 aa).

Residues 52 to 62 (PTANGMPGAHH) carry the 'HIGH' region motif. The 'KMSKS' region motif lies at 600-604 (KMSKH). Lys-603 contacts ATP.

It belongs to the class-I aminoacyl-tRNA synthetase family. IleS type 2 subfamily. As to quaternary structure, monomer. The cofactor is Zn(2+).

Its subcellular location is the cytoplasm. It carries out the reaction tRNA(Ile) + L-isoleucine + ATP = L-isoleucyl-tRNA(Ile) + AMP + diphosphate. Catalyzes the attachment of isoleucine to tRNA(Ile). As IleRS can inadvertently accommodate and process structurally similar amino acids such as valine, to avoid such errors it has two additional distinct tRNA(Ile)-dependent editing activities. One activity is designated as 'pretransfer' editing and involves the hydrolysis of activated Val-AMP. The other activity is designated 'posttransfer' editing and involves deacylation of mischarged Val-tRNA(Ile). This Streptomyces avermitilis (strain ATCC 31267 / DSM 46492 / JCM 5070 / NBRC 14893 / NCIMB 12804 / NRRL 8165 / MA-4680) protein is Isoleucine--tRNA ligase.